Here is a 189-residue protein sequence, read N- to C-terminus: B3 domain-containing protein At2g32645 (189 aa).

Positions 33–133 (FNQVKTPDFL…KLCFALTPKI (101 aa)) form a DNA-binding region, TF-B3.

The protein resides in the nucleus. This chain is B3 domain-containing protein At2g32645, found in Arabidopsis thaliana (Mouse-ear cress).